A 259-amino-acid chain; its full sequence is Thiamine thiazole synthase (259 aa).

Residues A33, 52–53, G60, V124, and 152–154 contribute to the NAD(+) site; these read ER and HVD. Fe cation-binding residues include D154 and H169. M219 is an NAD(+) binding site. R229 is a binding site for glycine.

It belongs to the THI4 family. In terms of assembly, homooctamer; tetramer of dimers. Requires Fe(2+) as cofactor.

It carries out the reaction hydrogen sulfide + glycine + NAD(+) = ADP-5-ethyl-4-methylthiazole-2-carboxylate + nicotinamide + 3 H2O + H(+). Its pathway is cofactor biosynthesis; thiamine diphosphate biosynthesis. Functionally, involved in the biosynthesis of the thiazole moiety of thiamine. Catalyzes the conversion of NAD and glycine to adenosine diphosphate 5-(2-hydroxyethyl)-4-methylthiazole-2-carboxylate (ADT), an adenylated thiazole intermediate, using free sulfide as a source of sulfur. The polypeptide is Thiamine thiazole synthase (Pyrobaculum neutrophilum (strain DSM 2338 / JCM 9278 / NBRC 100436 / V24Sta) (Thermoproteus neutrophilus)).